A 113-amino-acid chain; its full sequence is uncharacterized protein (113 aa).

To M.jannaschii MJ0886 C-terminal region.

This is an uncharacterized protein from Clostridium pasteurianum.